The sequence spans 623 residues: MPSTKNANGEGHFPSRIKQFFRINSGSKDHKDRDAHTTSSSHGGAPRADAKTPSGFRQSRFFSVGRLRSTTVVSEGNPLDESMSPTAHANPYFAHQGQPGLRHHNDGSVPPSPPDTPSLKVDGPEGSQQPTAATKEELARKLRRVASAPNAQGLFSKGQGNGDRPATAELSKEPLEESKDSNTVGFAEQKPNNDSSTSLAAPDADGLGALPPPIRQSPLAFRRTYSSNSIKVRNVEVGPQSFDKIKLIGKGDVGKVYLVKEKKSGRLYAMKVLSKKEMIKRNKIKRALAEQEILATSNHPFIVTLYHSFQSEDYLYLCMEYCSGGEFFRALQTRPGKCIPEDDARFYAAEVTAALEYLHLMGFIYRDLKPENILLHQSGHIMLSDFDLSKQSDPGGKPTMIIGKNGTSTSSLPTIDTKSCIANFRTNSFVGTEEYIAPEVIKGSGHTSAVDWWTLGILIYEMLYGTTPFKGKNRNATFANILREDIPFPDHAGAPQISNLCKSLIRKLLIKDENRRLGARAGASDIKTHPFFRTTQWALIRHMKPPIVPNQGRGIDTLNFRNVKESESVDISGSRQMGLKGEPLESGMVTPGENAVDPFEEFNSVTLHHDGDEEYHSDAYEKR.

Residues 1–215 (MPSTKNANGE…GLGALPPPIR (215 aa)) form a disordered region. Basic and acidic residues-rich tracts occupy residues 27–36 (SKDHKDRDAH) and 170–180 (LSKEPLEESKD). Residues 199-209 (LAAPDADGLGA) show a composition bias toward low complexity. The Protein kinase domain occupies 242–532 (FDKIKLIGKG…ASDIKTHPFF (291 aa)). ATP-binding positions include 248–256 (IGKGDVGKV) and Lys271. Asp367 acts as the Proton acceptor in catalysis. Residues 569–596 (VDISGSRQMGLKGEPLESGMVTPGENAV) are disordered.

Belongs to the protein kinase superfamily. Ser/Thr protein kinase family. KIN82 subfamily.

The catalysed reaction is L-seryl-[protein] + ATP = O-phospho-L-seryl-[protein] + ADP + H(+). It catalyses the reaction L-threonyl-[protein] + ATP = O-phospho-L-threonyl-[protein] + ADP + H(+). Controls entry of the cell into the asexual developmental program. Required to repress entry into the conidiation program. The chain is Serine/threonine-protein kinase nrc-2 (nrc-2) from Neurospora crassa (strain ATCC 24698 / 74-OR23-1A / CBS 708.71 / DSM 1257 / FGSC 987).